The following is a 500-amino-acid chain: Enolase (500 aa).

2 residues coordinate substrate: H225 and E234. E277 functions as the Proton donor in the catalytic mechanism. Mg(2+) contacts are provided by D312, E361, and D386. Residues E361 and D386 each coordinate substrate. Residue K411 is the Proton acceptor of the active site. Substrate-binding positions include 438–441 and K462; that span reads SHRS.

The protein belongs to the enolase family. As to quaternary structure, homodimer. Requires Mg(2+) as cofactor.

The protein localises to the cytoplasm. The catalysed reaction is (2R)-2-phosphoglycerate = phosphoenolpyruvate + H2O. It functions in the pathway carbohydrate degradation; glycolysis; pyruvate from D-glyceraldehyde 3-phosphate: step 4/5. Its function is as follows. Enzyme of the glycolytic pathway. Glycolysis is essential in glial cells but not in neurons; neurons rely on the citric acid cycle for their energy needs, and on lactate and alanine secreted into the hemolymph by glial cells to fuel it. This Drosophila melanogaster (Fruit fly) protein is Enolase.